Here is a 236-residue protein sequence, read N- to C-terminus: Protein Thf1 (236 aa).

A coiled-coil region spans residues 180-220 (PVEKMQKDLEQYRSNLEKMTQARKTLEDIVAAERKRRQQNA). Residues 206-236 (EDIVAAERKRRQQNAAPDRSPESASATEAPN) form a disordered region. Over residues 227-236 (ESASATEAPN) the composition is skewed to polar residues.

The protein belongs to the THF1 family.

May be involved in photosynthetic membrane biogenesis. This is Protein Thf1 from Cyanothece sp. (strain PCC 7425 / ATCC 29141).